The sequence spans 173 residues: Crossover junction endodeoxyribonuclease RuvC (173 aa).

Residues D8, E69, and D141 contribute to the active site. Mg(2+)-binding residues include D8, E69, and D141.

It belongs to the RuvC family. Homodimer which binds Holliday junction (HJ) DNA. The HJ becomes 2-fold symmetrical on binding to RuvC with unstacked arms; it has a different conformation from HJ DNA in complex with RuvA. In the full resolvosome a probable DNA-RuvA(4)-RuvB(12)-RuvC(2) complex forms which resolves the HJ. Mg(2+) is required as a cofactor.

The protein resides in the cytoplasm. It catalyses the reaction Endonucleolytic cleavage at a junction such as a reciprocal single-stranded crossover between two homologous DNA duplexes (Holliday junction).. Functionally, the RuvA-RuvB-RuvC complex processes Holliday junction (HJ) DNA during genetic recombination and DNA repair. Endonuclease that resolves HJ intermediates. Cleaves cruciform DNA by making single-stranded nicks across the HJ at symmetrical positions within the homologous arms, yielding a 5'-phosphate and a 3'-hydroxyl group; requires a central core of homology in the junction. The consensus cleavage sequence is 5'-(A/T)TT(C/G)-3'. Cleavage occurs on the 3'-side of the TT dinucleotide at the point of strand exchange. HJ branch migration catalyzed by RuvA-RuvB allows RuvC to scan DNA until it finds its consensus sequence, where it cleaves and resolves the cruciform DNA. The sequence is that of Crossover junction endodeoxyribonuclease RuvC from Stenotrophomonas maltophilia (strain K279a).